A 294-amino-acid chain; its full sequence is Formamidopyrimidine-DNA glycosylase (294 aa).

P2 (schiff-base intermediate with DNA) is an active-site residue. E3 functions as the Proton donor in the catalytic mechanism. The active-site Proton donor; for beta-elimination activity is the K61. The DNA site is built by H104, R123, and K169. The FPG-type zinc finger occupies 255–289 (AVYGRQDEPCRRCGAPIVREKFMNRSSYSCPRCQP). The active-site Proton donor; for delta-elimination activity is the R279.

It belongs to the FPG family. Monomer. It depends on Zn(2+) as a cofactor.

It catalyses the reaction Hydrolysis of DNA containing ring-opened 7-methylguanine residues, releasing 2,6-diamino-4-hydroxy-5-(N-methyl)formamidopyrimidine.. The enzyme catalyses 2'-deoxyribonucleotide-(2'-deoxyribose 5'-phosphate)-2'-deoxyribonucleotide-DNA = a 3'-end 2'-deoxyribonucleotide-(2,3-dehydro-2,3-deoxyribose 5'-phosphate)-DNA + a 5'-end 5'-phospho-2'-deoxyribonucleoside-DNA + H(+). In terms of biological role, involved in base excision repair of DNA damaged by oxidation or by mutagenic agents. Acts as a DNA glycosylase that recognizes and removes damaged bases. Has a preference for oxidized purines, such as 7,8-dihydro-8-oxoguanine (8-oxoG). Has AP (apurinic/apyrimidinic) lyase activity and introduces nicks in the DNA strand. Cleaves the DNA backbone by beta-delta elimination to generate a single-strand break at the site of the removed base with both 3'- and 5'-phosphates. The protein is Formamidopyrimidine-DNA glycosylase of Nocardia farcinica (strain IFM 10152).